Here is a 360-residue protein sequence, read N- to C-terminus: Peptide chain release factor 1 (360 aa).

The residue at position 235 (Q235) is an N5-methylglutamine.

This sequence belongs to the prokaryotic/mitochondrial release factor family. Post-translationally, methylated by PrmC. Methylation increases the termination efficiency of RF1.

Its subcellular location is the cytoplasm. In terms of biological role, peptide chain release factor 1 directs the termination of translation in response to the peptide chain termination codons UAG and UAA. The polypeptide is Peptide chain release factor 1 (Leptothrix cholodnii (strain ATCC 51168 / LMG 8142 / SP-6) (Leptothrix discophora (strain SP-6))).